The primary structure comprises 241 residues: Triosephosphate isomerase (241 aa).

Position 8-10 (Asn8–Lys10) interacts with substrate. His93 functions as the Electrophile in the catalytic mechanism. The Proton acceptor role is filled by Glu163. Substrate contacts are provided by residues Gly169, Ser205, and Gly226 to Gly227.

Belongs to the triosephosphate isomerase family. As to quaternary structure, homodimer.

It is found in the cytoplasm. The enzyme catalyses D-glyceraldehyde 3-phosphate = dihydroxyacetone phosphate. It functions in the pathway carbohydrate biosynthesis; gluconeogenesis. The protein operates within carbohydrate degradation; glycolysis; D-glyceraldehyde 3-phosphate from glycerone phosphate: step 1/1. Its function is as follows. Involved in the gluconeogenesis. Catalyzes stereospecifically the conversion of dihydroxyacetone phosphate (DHAP) to D-glyceraldehyde-3-phosphate (G3P). In Bdellovibrio bacteriovorus (strain ATCC 15356 / DSM 50701 / NCIMB 9529 / HD100), this protein is Triosephosphate isomerase.